We begin with the raw amino-acid sequence, 371 residues long: Probable protein phosphatase 2C 11 (371 aa).

Residues 29-49 form a helical membrane-spanning segment; sequence FFFFLFNSQTISSFIIFYLFL. The disordered stretch occupies residues 67-95; that stretch reads PPLSVAPLRGDANSPPPESSSSPATKSSL. Positions 85–94 are enriched in low complexity; that stretch reads SSSSPATKSS. The PPM-type phosphatase domain occupies 123-368; sequence SYGYSSLKGK…DNITCIVVRF (246 aa). Residues D159, G160, D320, and D359 each coordinate Mn(2+).

The protein belongs to the PP2C family. Mg(2+) is required as a cofactor. It depends on Mn(2+) as a cofactor.

It is found in the membrane. The catalysed reaction is O-phospho-L-seryl-[protein] + H2O = L-seryl-[protein] + phosphate. The enzyme catalyses O-phospho-L-threonyl-[protein] + H2O = L-threonyl-[protein] + phosphate. The polypeptide is Probable protein phosphatase 2C 11 (Arabidopsis thaliana (Mouse-ear cress)).